The primary structure comprises 110 residues: Tyrosine-protein phosphatase 3 (110 aa).

The Tyrosine-protein phosphatase domain maps to 1 to 110 (QKCATIVMVT…NPPHSGPIVV (110 aa)). Residue aspartate 80 coordinates substrate.

Belongs to the protein-tyrosine phosphatase family.

It carries out the reaction O-phospho-L-tyrosyl-[protein] + H2O = L-tyrosyl-[protein] + phosphate. The protein is Tyrosine-protein phosphatase 3 (STY-3) of Styela plicata (Wrinkled sea squirt).